A 322-amino-acid polypeptide reads, in one-letter code: uncharacterized protein (322 aa).

8 helical membrane passes run 7-27 (IQKI…IGAI), 54-74 (AFAL…LAMF), 87-107 (FVGF…LSGS), 128-148 (IAFC…ITFV), 162-182 (FLSV…YLLI), 209-229 (IGLT…LLPG), 249-269 (GIIS…LFLL), and 287-307 (VIYY…FELL).

To E.coli YbhN.

It localises to the cell membrane. This is an uncharacterized protein from Synechocystis sp. (strain ATCC 27184 / PCC 6803 / Kazusa).